Reading from the N-terminus, the 1179-residue chain is MSSFRVGGKVVEKVDLCRKKQLVWRLDVWPFAILYTVWLTTIVPSIDFSDACIALGGLSAFHILVLLFTTWSVDFKCFVQFSKVNSIDQADACKVTPAKFSGSKEVVPLHFRSQMTDSASSGDMEEIFFDFRKQRFIYSKELGAFSKLPYPTKETFGHYLKCTGHGTEAKIATATEKWGRNVFDYPQPTFQKLMKENCMEPFFVFQVFCVGLWCLDEFWYYSVFTLFMLFMFESTMAKSRLKTLTDLRSVRVDSQTVMVYRSGKWVKLLGTDLLPGDVVSIGRPSTQTGGEDKTVPADMLLLVGSAIVNEAILTGESTPQWKVPIVGQRSDEKLSIKRNKNHVLFGGTKILQHSPDKSFSLKTPDGGCLAVVLRTGFETSQGKLMRTILFSTERVTANSWESGLFILFLVVFAVIAAGYVLVKGLEDPTRSKYKLLLGCSLIITSVIPPELPMELSIAVNTSLLALVRRGIFCTEPFRIPFAGKVDLCCFDKTGTLTSDDMEFRGVGGLSNCEEAETDMSKVPVRTLEILASCHALVFVENKLVGDPLEKAALKGIDWSYKADEKALPRRGNGNSVQIMQRYHFASHLKRMSVIVRIQEEYLAFVKGAPETIQERLVDVPAQYIETYKRYTRQGSRVLALAYKRLPDMMVSEARDMDRDAVESDLTFAGFAVFNCPIRPDSAPVLLELKNSSHDLVMITGDQALTACHVAGQVHIVSNPVLILGRSGSGNEYKWVSPDEKEIIPYSEKEIETLAETHDLCIGGDSIEMLQATSAVLRVIPFVKVFARVAPQQKELILTTFKAVGRGTLMCGDGTNDVGALKQAHVGVALLNNKLPLSPSDSSKDDKSKSKKSKLPLEPASKTITQNGEGSSKGKIPPQNRHLTAAELQRQKLKKIMDDLNNDEGDGRSAPLVKLGDASMASPFTAKHASVAPVTDIIRQGRSTLVTTLQMFKILGLNCLATAYVLSVMYLDGVKLGDVQATISGVLTAAFFLFISHARPLQTLSAERPHPSVFSVYLFLSLIGQFAVHLTFLVYSVKEAEKHMPEECIEPDASFHPNLVNTVSYMVSMMLQVATFAVNYMGHPFNQSIRENKPFFYALIAGAGFFTVIASDLFRDLNDSLKLVPLPQGLRDKLLIWASLMFIICYSWERLLRWAFPGKISSWKHKQRAVTANLEKKKKV.

Residues 1–20 lie on the Cytoplasmic side of the membrane; sequence MSSFRVGGKVVEKVDLCRKK. A helical membrane pass occupies residues 21–42; the sequence is QLVWRLDVWPFAILYTVWLTTI. Over 43 to 50 the chain is Lumenal; the sequence is VPSIDFSD. A helical membrane pass occupies residues 51 to 71; the sequence is ACIALGGLSAFHILVLLFTTW. Topologically, residues 72 to 192 are cytoplasmic; the sequence is SVDFKCFVQF…FDYPQPTFQK (121 aa). A helical membrane pass occupies residues 193 to 215; sequence LMKENCMEPFFVFQVFCVGLWCL. Over 216-218 the chain is Lumenal; the sequence is DEF. The helical transmembrane segment at 219–238 threads the bilayer; that stretch reads WYYSVFTLFMLFMFESTMAK. Over 239 to 402 the chain is Cytoplasmic; that stretch reads SRLKTLTDLR…ERVTANSWES (164 aa). Residues 403-422 traverse the membrane as a helical segment; the sequence is GLFILFLVVFAVIAAGYVLV. The Lumenal portion of the chain corresponds to 423–435; it reads KGLEDPTRSKYKL. A helical transmembrane segment spans residues 436–453; the sequence is LLGCSLIITSVIPPELPM. At 454 to 947 the chain is on the cytoplasmic side; it reads ELSIAVNTSL…RQGRSTLVTT (494 aa). The 4-aspartylphosphate intermediate role is filled by Asp-491. The Mg(2+) site is built by Asp-812 and Asp-816. The segment at 833 to 880 is disordered; it reads KLPLSPSDSSKDDKSKSKKSKLPLEPASKTITQNGEGSSKGKIPPQNR. A helical membrane pass occupies residues 948-967; it reads LQMFKILGLNCLATAYVLSV. Residues 968-979 are Lumenal-facing; it reads MYLDGVKLGDVQ. The helical transmembrane segment at 980 to 997 threads the bilayer; that stretch reads ATISGVLTAAFFLFISHA. Residues 998–1013 are Cytoplasmic-facing; the sequence is RPLQTLSAERPHPSVF. The chain crosses the membrane as a helical span at residues 1014 to 1034; the sequence is SVYLFLSLIGQFAVHLTFLVY. At 1035–1059 the chain is on the lumenal side; sequence SVKEAEKHMPEECIEPDASFHPNLV. The chain crosses the membrane as a helical span at residues 1060-1079; sequence NTVSYMVSMMLQVATFAVNY. Residues 1080–1092 are Cytoplasmic-facing; it reads MGHPFNQSIRENK. The chain crosses the membrane as a helical span at residues 1093 to 1110; sequence PFFYALIAGAGFFTVIAS. Residues 1111–1128 are Lumenal-facing; the sequence is DLFRDLNDSLKLVPLPQG. The helical transmembrane segment at 1129–1148 threads the bilayer; that stretch reads LRDKLLIWASLMFIICYSWE. At 1149–1179 the chain is on the cytoplasmic side; the sequence is RLLRWAFPGKISSWKHKQRAVTANLEKKKKV.

This sequence belongs to the cation transport ATPase (P-type) (TC 3.A.3) family. Type V subfamily. As to expression, highly expressed in root meristem. Expressed in pavement cells of trichomes, stipules, stamens and pollen grains.

Its subcellular location is the endoplasmic reticulum membrane. It carries out the reaction ATP + H2O = ADP + phosphate + H(+). In terms of biological role, mediates manganese transport into the endoplasmic reticulum. The ATPase activity is required for cellular manganese homeostasis. Plays an important role in pollen and root development through its impact on protein secretion and transport processes. Functions together with LPR1 and LPR2 in a common pathway that adjusts root meristem activity to phosphate availability. Under phosphate limitation, restricts SHR movement in root meristem and is required for maintaining SCR expression in the root meristem stem-cell niche as well as for proximal meristem activity. Can complement the yeast spf1 mutant. This chain is Probable manganese-transporting ATPase PDR2 (PDR2), found in Arabidopsis thaliana (Mouse-ear cress).